Here is a 513-residue protein sequence, read N- to C-terminus: Cytochrome P450 86A1 (513 aa).

The chain crosses the membrane as a helical span at residues 7-27 (ILTGYAVAALSVYALWFYFLS). Residue cysteine 456 participates in heme binding.

This sequence belongs to the cytochrome P450 family. Requires heme as cofactor. As to expression, expressed in roots.

Its subcellular location is the membrane. It catalyses the reaction an omega-methyl-long-chain fatty acid + reduced [NADPH--hemoprotein reductase] + O2 = an omega-hydroxy-long-chain fatty acid + oxidized [NADPH--hemoprotein reductase] + H2O + H(+). Catalyzes the omega-hydroxylation of various fatty acids (FA). Acts on saturated and unsaturated fatty acids with chain lengths from C12 to C18 but not on hexadecane. This is Cytochrome P450 86A1 (CYP86A1) from Arabidopsis thaliana (Mouse-ear cress).